The chain runs to 767 residues: Protein transport protein Sec23B (767 aa).

Residue Ala2 is modified to N-acetylalanine. Residues Cys61, Cys66, Cys85, and Cys88 each contribute to the Zn(2+) site. Position 564 is an N6-acetyllysine (Lys564). The stretch at 634–720 (PEPVLLDSSS…EHGGSQARFL (87 aa)) is one Gelsolin-like repeat.

Belongs to the SEC23/SEC24 family. SEC23 subfamily. COPII is composed of at least five proteins: the Sec23/24 complex, the Sec13/31 complex and Sar1. Interacts with SAR1A.

It localises to the cytoplasmic vesicle. Its subcellular location is the COPII-coated vesicle membrane. The protein localises to the endoplasmic reticulum membrane. It is found in the cytoplasm. The protein resides in the cytosol. Functionally, component of the coat protein complex II (COPII) which promotes the formation of transport vesicles from the endoplasmic reticulum (ER). The coat has two main functions, the physical deformation of the endoplasmic reticulum membrane into vesicles and the selection of cargo molecules for their transport to the Golgi complex. The sequence is that of Protein transport protein Sec23B from Mus musculus (Mouse).